The following is a 352-amino-acid chain: Anthranilate phosphoribosyltransferase (352 aa).

5-phospho-alpha-D-ribose 1-diphosphate contacts are provided by residues G96, 99–100 (GS), S104, 106–109 (NIST), 124–132 (KHGNRSVSS), and S136. G96 is a binding site for anthranilate. A Mg(2+)-binding site is contributed by S108. Residue N127 participates in anthranilate binding. R182 contacts anthranilate. Positions 241 and 242 each coordinate Mg(2+).

The protein belongs to the anthranilate phosphoribosyltransferase family. Homodimer. It depends on Mg(2+) as a cofactor.

The enzyme catalyses N-(5-phospho-beta-D-ribosyl)anthranilate + diphosphate = 5-phospho-alpha-D-ribose 1-diphosphate + anthranilate. It participates in amino-acid biosynthesis; L-tryptophan biosynthesis; L-tryptophan from chorismate: step 2/5. Functionally, catalyzes the transfer of the phosphoribosyl group of 5-phosphorylribose-1-pyrophosphate (PRPP) to anthranilate to yield N-(5'-phosphoribosyl)-anthranilate (PRA). This chain is Anthranilate phosphoribosyltransferase, found in Syntrophotalea carbinolica (strain DSM 2380 / NBRC 103641 / GraBd1) (Pelobacter carbinolicus).